A 359-amino-acid chain; its full sequence is N6-succino-2-amino-2'-deoxyadenylate synthase (359 aa).

Residue serine 23 is the Proton acceptor of the active site. The ATP site is built by serine 23, threonine 24, glycine 25, lysine 26, and glycine 27. Serine 23 serves as a coordination point for dGMP. Serine 23 serves as a coordination point for Mg(2+). Asparagine 49 provides a ligand contact to dGMP. ATP-binding residues include glycine 51, histidine 52, and threonine 53. Glycine 51 provides a ligand contact to Mg(2+). DGMP-binding residues include serine 131, threonine 132, and arginine 146. Position 190 (glutamine 190) interacts with ATP. Residue threonine 205 participates in dGMP binding. Mg(2+) is bound at residue threonine 274. Threonine 274, valine 275, and arginine 280 together coordinate L-aspartate. Positions 305 and 308 each coordinate ATP.

Belongs to the Caudovirales PurZ family. The cofactor is Mg(2+).

It carries out the reaction dGMP + L-aspartate + ATP = (2S)-2-amino-2'-deoxyadenylo-succinate + ADP + phosphate + 2 H(+). It participates in purine metabolism. Involved in the synthesis of the atypical nucleotide dZTP (2-amino-2'-deoxyadenosine-5'-triphosphate). Catalyzes the condensation of aspartate with deoxyguanylate into dSMP (N6-succino-2-amino-2'-deoxyadenylate), which undergoes defumarylation and phosphorylation respectively by host PurB and guanylate/nucleoside diphosphate kinases to give dZTP. dZTP is integrated into the viral genome instead of adenine by the viral DNA polymerase. This Z-base probably completely replaces adenosine and forms a triple bond to the opposite T-base. The resulting non-standard viral DNA is called Z-genome. The chemically modified DNA is probably harder for the host bacteria to digest with nucleases or restriction enzymes. This Cyanophage S-2L (Cyanobacteria phage S-2L) protein is N6-succino-2-amino-2'-deoxyadenylate synthase.